A 320-amino-acid polypeptide reads, in one-letter code: Fructose-1,6-bisphosphatase class 1 (320 aa).

Mg(2+) is bound by residues E93, D114, L116, and D117. Substrate-binding positions include 117-120 (DGSS), Y225, and K256. Position 262 (E262) interacts with Mg(2+).

Belongs to the FBPase class 1 family. In terms of assembly, homotetramer. It depends on Mg(2+) as a cofactor.

It is found in the cytoplasm. It carries out the reaction beta-D-fructose 1,6-bisphosphate + H2O = beta-D-fructose 6-phosphate + phosphate. Its pathway is carbohydrate biosynthesis; gluconeogenesis. This is Fructose-1,6-bisphosphatase class 1 from Syntrophotalea carbinolica (strain DSM 2380 / NBRC 103641 / GraBd1) (Pelobacter carbinolicus).